Here is a 500-residue protein sequence, read N- to C-terminus: Na(+)/H(+) antiporter NhaB (500 aa).

Transmembrane regions (helical) follow at residues 28–50 (FLLL…VLVG), 68–88 (GGLL…ALYA), 98–118 (LLLM…LLLF), 121–141 (LLLG…LAAL), 145–165 (FLDA…FFAV), 205–225 (LLMH…VGEP), 244–264 (QVAP…VLLE), 311–331 (VLIV…LLVI), 350–370 (FQEA…VAVI), 394–414 (MLFI…VATI), 449–469 (VATP…IAPL), and 477–497 (MVWM…WAVS).

Belongs to the NhaB Na(+)/H(+) (TC 2.A.34) antiporter family.

The protein localises to the cell inner membrane. It carries out the reaction 2 Na(+)(in) + 3 H(+)(out) = 2 Na(+)(out) + 3 H(+)(in). Na(+)/H(+) antiporter that extrudes sodium in exchange for external protons. The chain is Na(+)/H(+) antiporter NhaB from Pseudomonas aeruginosa (strain LESB58).